The sequence spans 174 residues: Adenine phosphoribosyltransferase (174 aa).

It belongs to the purine/pyrimidine phosphoribosyltransferase family. Homodimer.

It localises to the cytoplasm. It carries out the reaction AMP + diphosphate = 5-phospho-alpha-D-ribose 1-diphosphate + adenine. It functions in the pathway purine metabolism; AMP biosynthesis via salvage pathway; AMP from adenine: step 1/1. Catalyzes a salvage reaction resulting in the formation of AMP, that is energically less costly than de novo synthesis. The chain is Adenine phosphoribosyltransferase from Nitrosomonas europaea (strain ATCC 19718 / CIP 103999 / KCTC 2705 / NBRC 14298).